The sequence spans 874 residues: MTVPNVLAKALYDNVAESPDELSFRKGDIMTVLERDTQGLDGWWLCSLHGRQGIVPGNRLKILVGMYDKKPVGPGPGPPATPPQPQPSLPQGVHAPVPPASQYSPMLPTAYQPQSDNVYLVPTPSKTQQGLYQAPGPNPQFQSPPAKQTSTFSKQTPHHSFPSPATDLYQVPPGPGSPAQDIYQVPPSAGIGHDIYQVPPSLDTRGWEGTKPPAKVVVPTRVGQGYVYEAAQTEQDEYDTPRHLLAPGPQDIYDVPPVRGLLPNQYGQEVYDTPPMAVKGPNGRDPLLDVYDVPPSVEKGLLSSSHHSVYDVPPSVSKDVPDGPLLREETYDVPPAFAKPKPFDPTRHPLILAAPPPDSPAAEDVYDVPPPAPDLYDVPPGLRRPGPGTLYDVPRERVLPPEVADGSVVDDGVYAVPPPAEREAPTDGKRLSASSTGSTRSSQSASSLEVVVPGREPLELEVAVESLARLQQGVSTTVAHLLDLVGSASGPGGWRGTSEPQEPPAQDLKAAVAAVHGAVHELLEFARGAVSNATHTSDRTLHAKLSRQLQKMEDVYQTLVVHGQVLDSGRGSPGFTPEDLDRLVACSRAVPEDAKQLASFLHGNASLLFRRTKAPGPGPEGSSSLHPNPTDKASSIQSRPLPSPPKFTSQDSPDGQYENSEGGWMEDYDYVHLQGKEEFEKTQKELLERGNIMRQGKGQLELQQLKQFERLEQEVSRPIDHDLANWTPAQPLVPGRTGGLGPSDRQLLLFYLEQCEANLTTLTDAVDAFFTAVATNQPPKIFVAHSKFVILSAHKLVFIGDTLSRQAKAADVRSQVTHYSNLLCDLLRGIVATTKAAALQYPSPSAAQDMVDRVKELGHSTQQFRRVLGQLAAA.

Met1 carries the post-translational modification N-acetylmethionine. The 63-residue stretch at 3 to 65 (VPNVLAKALY…PGNRLKILVG (63 aa)) folds into the SH3 domain. Residues 71-177 (PVGPGPGPPA…LYQVPPGPGS (107 aa)) form a disordered region. Residues 73-88 (GPGPGPPATPPQPQPS) are compositionally biased toward pro residues. The tract at residues 119–420 (YLVPTPSKTQ…DGVYAVPPPA (302 aa)) is substrate for kinases. Phosphotyrosine is present on Tyr132. Residues 139–155 (PQFQSPPAKQTSTFSKQ) are compositionally biased toward polar residues. A Phosphoserine modification is found at Ser143. Residues Tyr238 and Tyr253 each carry the phosphotyrosine modification. Residue Thr273 is modified to Phosphothreonine. A Phosphoserine modification is found at Ser296. A phosphotyrosine mark is found at Tyr366, Tyr376, and Tyr414. A compositionally biased stretch (low complexity) spans 374 to 388 (DLYDVPPGLRRPGPG). 3 disordered regions span residues 374-394 (DLYD…YDVP), 409-450 (VDDG…SLEV), and 610-662 (RRTK…NSEG). Residues 420–430 (AEREAPTDGKR) are compositionally biased toward basic and acidic residues. The segment covering 431–448 (LSASSTGSTRSSQSASSL) has biased composition (low complexity). 3 positions are modified to phosphoserine: Ser432, Ser441, and Ser643. Polar residues predominate over residues 621–659 (GSSSLHPNPTDKASSIQSRPLPSPPKFTSQDSPDGQYEN). The short motif at 639–647 (RPLPSPPKF) is the SH3-binding element. The segment at 750–800 (FYLEQCEANLTTLTDAVDAFFTAVATNQPPKIFVAHSKFVILSAHKLVFIG) is divergent helix-loop-helix motif.

It belongs to the CAS family. In terms of assembly, forms complexes in vivo with PTK2/FAK1, adapter protein CRKL and LYN kinase. Can heterodimerize with NEDD9. Component of a complex comprised of SH2D3C, BCAR1/CAS, and CRK. Within the complex, interacts with SH2D3C (via C-terminus), and CRK. Part of a complex comprised of PTPRA, BCAR1, BCAR3 (via SH2 domain) and SRC; the formation of the complex is dependent on integrin mediated-tyrosine phosphorylation of PTPRA. Interacts with BCAR3 (via Ras-GEF domain); the interaction regulates adhesion-dependent serine phosphorylation. Interacts with SMAD2 and SMAD3. Interacts with NPHP1. Interacts with PTK2B/PYK2. Interacts (via C-terminus) with SH2D3C/CHAT isoform 2 (via C-terminus). Interacts with activated CSPG4. Interacts with BMX, INPPL1/SHIP2 and PEAK1. Part of a collagen stimulated complex involved in cell migration composed of CDC42, CRK, TNK2 and BCAR1/p130cas. Interacts with TNK2 via SH3 domains. Interacts (when tyrosine-phosphorylated) with tensin TNS1; the interaction is increased by phosphorylation of TNS1. In terms of processing, PTK2/FAK1 activation mediates phosphorylation at the YDYVHL motif; phosphorylation is most likely catalyzed by SRC family members. SRC-family kinases are recruited to the phosphorylated sites and can phosphorylate other tyrosine residues. Tyrosine phosphorylation is triggered by integrin mediated adhesion of cells to the extracellular matrix. Dephosphorylated by PTPN14 at Tyr-132. Post-translationally, phosphorylated by SRC kinase in a EDN1- and PTK2B-mediated manner; phosphorylation strengthens its interaction with BCAR3 as part of the PTK2B/BCAR1/BCAR3/RAP1 signaling pathway. As to expression, expressed in olfactory sensory neurons (at protein level). Expressed abundantly in the liver, lung, brain, and at lower levels in the heart (at protein level).

The protein localises to the cell junction. It localises to the focal adhesion. Its subcellular location is the cytoplasm. The protein resides in the cell projection. It is found in the axon. Functionally, docking protein which plays a central coordinating role for tyrosine kinase-based signaling related to cell adhesion. Implicated in induction of cell migration and cell branching. Involved in the BCAR3-mediated inhibition of TGFB signaling. The sequence is that of Breast cancer anti-estrogen resistance protein 1 (Bcar1) from Mus musculus (Mouse).